We begin with the raw amino-acid sequence, 633 residues long: Chaperone protein DnaK (633 aa).

Phosphothreonine; by autocatalysis is present on T196. The interval 594-633 (NLYGQPGAEPQPETNGHAGGSKGGDGAVNAEYEVIDGDDK) is disordered. A compositionally biased stretch (gly residues) spans 610–619 (HAGGSKGGDG).

It belongs to the heat shock protein 70 family.

Acts as a chaperone. In Chlorobaculum tepidum (strain ATCC 49652 / DSM 12025 / NBRC 103806 / TLS) (Chlorobium tepidum), this protein is Chaperone protein DnaK.